A 126-amino-acid polypeptide reads, in one-letter code: Holo-[acyl-carrier-protein] synthase (126 aa).

Asp-9 and Glu-58 together coordinate Mg(2+).

Belongs to the P-Pant transferase superfamily. AcpS family. The cofactor is Mg(2+).

The protein localises to the cytoplasm. It carries out the reaction apo-[ACP] + CoA = holo-[ACP] + adenosine 3',5'-bisphosphate + H(+). Transfers the 4'-phosphopantetheine moiety from coenzyme A to a Ser of acyl-carrier-protein. In Buchnera aphidicola subsp. Schizaphis graminum (strain Sg), this protein is Holo-[acyl-carrier-protein] synthase.